We begin with the raw amino-acid sequence, 1846 residues long: Brefeldin A-inhibited guanine nucleotide-exchange protein 1 (1846 aa).

A DCB; DCB:DCB domain and DCB:HUS domain interaction region spans residues 2–224 (YEGKKTKNMF…QEAKQMERER (223 aa)). Ser52 is subject to Phosphoserine. Disordered stretches follow at residues 217-248 (AKQM…HLRY), 264-302 (DLDP…DQAT), and 347-410 (VSAS…SPGA). Positions 267–277 (PQTHDVDKSLQ) are enriched in basic and acidic residues. Phosphoserine occurs at positions 286, 289, 290, 394, and 407. Residues 391-406 (SVSSNDTQESGNSSGP) are compositionally biased toward polar residues. Residues 554–574 (ADAQSVVDIYVNYDCDLNAAN) form an HUS; DCB:HUS domain interaction region. A disordered region spans residues 631–684 (PNSQTTLGQEKPSEQEISEIKHPETINRYGSLNSLESTSSSGIGSYSTQMSGTD). A compositionally biased stretch (basic and acidic residues) spans 641–655 (KPSEQEISEIKHPET). Over residues 661–681 (SLNSLESTSSSGIGSYSTQMS) the composition is skewed to low complexity. Residues 688-877 (QFEVLKQQKE…SAIYNEIAGK (190 aa)) form the SEC7 domain. A Nuclear localization signal (NLS) motif is present at residues 708-712 (KKPKR). Phosphoserine is present on residues Ser1076, Ser1563, and Ser1566. Residues 1571 to 1600 (DSAQPRSSDNRQQAPLVSVSPASEEVSKGR) form a disordered region. A compositionally biased stretch (polar residues) spans 1574–1585 (QPRSSDNRQQAP).

Homodimer. Interacts with ARFGEF2/BIG2; both proteins are probably part of the same or very similar macromolecular complexes. Interacts with FKBP2. Interacts with MYO9B. Interacts with PRKAR1A and PRKAR2A. Interacts with PPP1CC. Interacts with NCL, FBL, NUP62 and U3 small nucleolar RNA. Interacts with DPY30. Interacts with PDE3A. Interacts with KANK1. Interacts with TBC1D22A and TBC1D22B. Post-translationally, phosphorylated. In vitro phosphorylated by PKA reducing its GEF activity and dephosphorylated by phosphatase PP1.

It is found in the cytoplasm. Its subcellular location is the perinuclear region. It localises to the golgi apparatus. The protein resides in the trans-Golgi network. The protein localises to the nucleus. It is found in the nucleolus. Its subcellular location is the nucleus matrix. It localises to the membrane. With respect to regulation, inhibited by brefeldin A. Its function is as follows. Promotes guanine-nucleotide exchange on ARF1 and ARF3. Promotes the activation of ARF1/ARF3 through replacement of GDP with GTP. Involved in vesicular trafficking. Required for the maintenance of Golgi structure; the function may be independent of its GEF activity. Required for the maturation of integrin beta-1 in the Golgi. Involved in the establishment and persistence of cell polarity during directed cell movement in wound healing. Proposed to act as A kinase-anchoring protein (AKAP) and may mediate crosstalk between Arf and PKA pathways. Inhibits GAP activity of MYO9B probably through competitive RhoA binding. The function in the nucleus remains to be determined. The sequence is that of Brefeldin A-inhibited guanine nucleotide-exchange protein 1 (Arfgef1) from Rattus norvegicus (Rat).